Reading from the N-terminus, the 185-residue chain is ATP synthase subunit b 2 (185 aa).

The tract at residues 1–24 (MADSHGNAKGATAHTEAGGGHKAP) is disordered. Residues 34 to 56 (ASQLVSLTIAFVALYLISSRLAL) traverse the membrane as a helical segment.

The protein belongs to the ATPase B chain family. F-type ATPases have 2 components, F(1) - the catalytic core - and F(0) - the membrane proton channel. F(1) has five subunits: alpha(3), beta(3), gamma(1), delta(1), epsilon(1). F(0) has three main subunits: a(1), b(2) and c(10-14). The alpha and beta chains form an alternating ring which encloses part of the gamma chain. F(1) is attached to F(0) by a central stalk formed by the gamma and epsilon chains, while a peripheral stalk is formed by the delta and b chains.

The protein resides in the cell inner membrane. Its function is as follows. F(1)F(0) ATP synthase produces ATP from ADP in the presence of a proton or sodium gradient. F-type ATPases consist of two structural domains, F(1) containing the extramembraneous catalytic core and F(0) containing the membrane proton channel, linked together by a central stalk and a peripheral stalk. During catalysis, ATP synthesis in the catalytic domain of F(1) is coupled via a rotary mechanism of the central stalk subunits to proton translocation. In terms of biological role, component of the F(0) channel, it forms part of the peripheral stalk, linking F(1) to F(0). The b'-subunit is a diverged and duplicated form of b found in plants and photosynthetic bacteria. This is ATP synthase subunit b 2 (atpF2) from Nitrobacter hamburgensis (strain DSM 10229 / NCIMB 13809 / X14).